The following is a 352-amino-acid chain: Putative conjugal transfer protein MT3759 (352 aa).

160-167 (GGTGAGKT) serves as a coordination point for ATP.

Belongs to the GSP E family.

The protein resides in the cytoplasm. The sequence is that of Putative conjugal transfer protein MT3759 from Mycobacterium tuberculosis (strain CDC 1551 / Oshkosh).